The following is a 101-amino-acid chain: Acylphosphatase-1 (101 aa).

Ser-2 carries the post-translational modification N-acetylserine. At Ser-2 the chain carries N-acetylalanine. An Acylphosphatase-like domain is found at 11 to 101 (SVDYEVFGKV…LDYSDFQIVK (91 aa)). Catalysis depends on residues Arg-26 and Asn-44.

This sequence belongs to the acylphosphatase family. In terms of tissue distribution, organ-common type isozyme is found in many different tissues.

The enzyme catalyses an acyl phosphate + H2O = a carboxylate + phosphate + H(+). This Sus scrofa (Pig) protein is Acylphosphatase-1 (ACYP1).